The sequence spans 558 residues: Urocanate hydratase (558 aa).

NAD(+)-binding positions include 50-51 (GG), Gln128, 174-176 (GMG), Glu194, Arg199, 240-241 (NA), 261-265 (QTSAH), 271-272 (YI), and Tyr320. Cys408 is a catalytic residue. Gly490 contributes to the NAD(+) binding site.

It belongs to the urocanase family. It depends on NAD(+) as a cofactor.

The protein localises to the cytoplasm. It catalyses the reaction 4-imidazolone-5-propanoate = trans-urocanate + H2O. It participates in amino-acid degradation; L-histidine degradation into L-glutamate; N-formimidoyl-L-glutamate from L-histidine: step 2/3. Functionally, catalyzes the conversion of urocanate to 4-imidazolone-5-propionate. This is Urocanate hydratase from Deinococcus radiodurans (strain ATCC 13939 / DSM 20539 / JCM 16871 / CCUG 27074 / LMG 4051 / NBRC 15346 / NCIMB 9279 / VKM B-1422 / R1).